The chain runs to 843 residues: Tetratricopeptide repeat protein 7B (843 aa).

The TPR 1 repeat unit spans residues 97–131 (QESNLVMAKLTYVEGDYKEALNIYARVGLDDLPLT). Ser160 and Ser202 each carry phosphoserine. TPR repeat units follow at residues 219-252 (ETGL…VETR), 363-396 (SVVY…AFEE), 397-430 (FHLW…KPDD), 479-514 (TYSL…SPTD), 516-548 (QAAF…QGDD), and 549-582 (ANSL…YPEN). Residues Ser625, Ser629, Ser630, Ser673, Ser677, Ser678, and Ser681 each carry the phosphoserine modification. TPR repeat units lie at residues 696–729 (AQIW…FPMS), 730–763 (HNVL…SPTH), 765–797 (KSMQ…NSTA), and 798–831 (HEVW…EASS).

Component of a phosphatidylinositol 4-kinase (PI4K) complex, composed of PI4KA, EFR3 (EFR3A or EFR3B), TTC7 (TTC7A or TTC7B) and HYCC (HYCC1 or HYCC2). Interacts with PI4KA, interaction is direct. Interacts with EFR3 (EFR3A or EFR3B), interaction is direct. Interacts with HYCC (HYCC1 or HYCC2), interaction is direct. Association with the PI4K complex is strongly reduced by TMEM150A.

The protein resides in the cytoplasm. The protein localises to the cytosol. Its subcellular location is the cell membrane. Component of a complex required to localize phosphatidylinositol 4-kinase (PI4K) to the plasma membrane. The complex acts as a regulator of phosphatidylinositol 4-phosphate (PtdIns(4)P) synthesis. In the complex, plays a central role in bridging PI4KA to EFR3B and HYCC1, via direct interactions. The polypeptide is Tetratricopeptide repeat protein 7B (Mus musculus (Mouse)).